Reading from the N-terminus, the 171-residue chain is uncharacterized protein (171 aa).

Disordered regions lie at residues 1 to 50 (MSHR…THLS) and 71 to 91 (RIDK…PMMK).

This is an uncharacterized protein from Caenorhabditis elegans.